Reading from the N-terminus, the 24-residue chain is Outer membrane protein (24 aa).

The protein belongs to the Gram-negative porin family. In terms of assembly, homotrimer.

It localises to the cell outer membrane. In terms of biological role, forms pores that allow passive diffusion of small molecules across the outer membrane. The sequence is that of Outer membrane protein from Sodalis glossinidius.